Reading from the N-terminus, the 418-residue chain is MAQESVMFSDVSVDFSQEEWECLNDDQRDLYRDVMLENYSNLVSMGHSISKPNVISYLEQGKEPWLADRELTRGQWPVLESRCETKKLFLKKEIYEIESTQWEIMEKLTRRDFQCSSFRDDWECNRQFKKELGSQGGHFNQLVFTHEDLPTLSHHPSFTLQQIINSKKKFCASKEYRKTFRHGSQFATHEIIHTIEKPYECKECGKSFRHPSRLTHHQKIHTGKKPFECKECGKTFICGSDLTRHHRIHTGEKPYECKECGKAFSSGSNFTRHQRIHTGEKPYECKECGKAFSSGSNFTQHQRIHTGEKPYECKECGNAFSQSSQLIKHQRIHTGEKPYECKECEKAFRSGSDLTRHQRIHTGEKPYECKICGKAYSQSSQLISHHRIHTSEKPYEYRECGKNFNYDPQLIQHQNLYW.

One can recognise a KRAB domain in the interval 6–77; that stretch reads VMFSDVSVDF…DRELTRGQWP (72 aa). The segment at 169–193 adopts a C2H2-type 1; degenerate zinc-finger fold; the sequence is KFCASKEYRKTFRHGSQFATHEIIH. 7 consecutive C2H2-type zinc fingers follow at residues 199–221, 227–249, 255–277, 283–305, 311–333, 339–361, and 367–389; these read YECK…QKIH, FECK…HRIH, YECK…QRIH, and YECK…HRIH. Residues Lys-314 and Lys-328 each participate in a glycyl lysine isopeptide (Lys-Gly) (interchain with G-Cter in SUMO2) cross-link.

The protein belongs to the krueppel C2H2-type zinc-finger protein family.

The protein resides in the nucleus. Functionally, may be involved in transcriptional regulation. The polypeptide is Zinc finger protein 566 (ZNF566) (Homo sapiens (Human)).